A 377-amino-acid chain; its full sequence is tRNA pseudouridine synthase B (377 aa).

Asp53 functions as the Nucleophile in the catalytic mechanism.

The protein belongs to the pseudouridine synthase TruB family. Type 1 subfamily.

It catalyses the reaction uridine(55) in tRNA = pseudouridine(55) in tRNA. Functionally, responsible for synthesis of pseudouridine from uracil-55 in the psi GC loop of transfer RNAs. In Tropheryma whipplei (strain Twist) (Whipple's bacillus), this protein is tRNA pseudouridine synthase B.